Consider the following 385-residue polypeptide: Meiotic recombination protein SPO11-2 (385 aa).

The region spanning 24 to 169 is the Topo IIA-type catalytic domain; it reads LPPAEVRARI…LGIMASSRGA (146 aa). The O-(5'-phospho-DNA)-tyrosine intermediate role is filled by Tyr126. Positions 219 and 272 each coordinate Mg(2+).

The protein belongs to the TOP6A family. Interacts with TOP6B. The cofactor is Mg(2+). In terms of tissue distribution, highly expressed in flowers before pollination. Expressed in roots and shoots.

It localises to the nucleus. It catalyses the reaction ATP-dependent breakage, passage and rejoining of double-stranded DNA.. Functionally, required for meiotic recombination. Mediates DNA cleavage that forms the double-strand breaks (DSB) that initiate meiotic recombination. This Oryza sativa subsp. indica (Rice) protein is Meiotic recombination protein SPO11-2 (SPO11-2).